A 288-amino-acid chain; its full sequence is Elongation factor Ts (288 aa).

The involved in Mg(2+) ion dislocation from EF-Tu stretch occupies residues 82–85 (TDFV).

The protein belongs to the EF-Ts family.

The protein localises to the cytoplasm. Associates with the EF-Tu.GDP complex and induces the exchange of GDP to GTP. It remains bound to the aminoacyl-tRNA.EF-Tu.GTP complex up to the GTP hydrolysis stage on the ribosome. The chain is Elongation factor Ts from Chlorobaculum parvum (strain DSM 263 / NCIMB 8327) (Chlorobium vibrioforme subsp. thiosulfatophilum).